A 214-amino-acid polypeptide reads, in one-letter code: Probable transaldolase (214 aa).

Lys-83 functions as the Schiff-base intermediate with substrate in the catalytic mechanism.

Belongs to the transaldolase family. Type 3B subfamily.

Its subcellular location is the cytoplasm. It catalyses the reaction D-sedoheptulose 7-phosphate + D-glyceraldehyde 3-phosphate = D-erythrose 4-phosphate + beta-D-fructose 6-phosphate. It functions in the pathway carbohydrate degradation; pentose phosphate pathway; D-glyceraldehyde 3-phosphate and beta-D-fructose 6-phosphate from D-ribose 5-phosphate and D-xylulose 5-phosphate (non-oxidative stage): step 2/3. In terms of biological role, transaldolase is important for the balance of metabolites in the pentose-phosphate pathway. This is Probable transaldolase from Clostridium tetani (strain Massachusetts / E88).